Consider the following 190-residue polypeptide: Guanylate kinase (190 aa).

The Guanylate kinase-like domain occupies 3-185 (NYIFIISAPS…SLEQLCKYFE (183 aa)). 10 to 17 (APSGAGKS) lines the ATP pocket.

The protein belongs to the guanylate kinase family.

It localises to the cytoplasm. The catalysed reaction is GMP + ATP = GDP + ADP. In terms of biological role, essential for recycling GMP and indirectly, cGMP. The sequence is that of Guanylate kinase from Francisella tularensis subsp. holarctica (strain OSU18).